The following is a 159-amino-acid chain: NADH-quinone oxidoreductase subunit B (159 aa).

[4Fe-4S] cluster is bound by residues cysteine 37, cysteine 38, cysteine 102, and cysteine 132.

It belongs to the complex I 20 kDa subunit family. NDH-1 is composed of 14 different subunits. Subunits NuoB, C, D, E, F, and G constitute the peripheral sector of the complex. The cofactor is [4Fe-4S] cluster.

It localises to the cell inner membrane. It catalyses the reaction a quinone + NADH + 5 H(+)(in) = a quinol + NAD(+) + 4 H(+)(out). Its function is as follows. NDH-1 shuttles electrons from NADH, via FMN and iron-sulfur (Fe-S) centers, to quinones in the respiratory chain. The immediate electron acceptor for the enzyme in this species is believed to be ubiquinone. Couples the redox reaction to proton translocation (for every two electrons transferred, four hydrogen ions are translocated across the cytoplasmic membrane), and thus conserves the redox energy in a proton gradient. This chain is NADH-quinone oxidoreductase subunit B, found in Variovorax paradoxus (strain S110).